The following is a 549-amino-acid chain: Glucose-6-phosphate isomerase (549 aa).

Glu-355 (proton donor) is an active-site residue. Catalysis depends on residues His-386 and Lys-514.

This sequence belongs to the GPI family.

It localises to the cytoplasm. It catalyses the reaction alpha-D-glucose 6-phosphate = beta-D-fructose 6-phosphate. It functions in the pathway carbohydrate biosynthesis; gluconeogenesis. It participates in carbohydrate degradation; glycolysis; D-glyceraldehyde 3-phosphate and glycerone phosphate from D-glucose: step 2/4. Its function is as follows. Catalyzes the reversible isomerization of glucose-6-phosphate to fructose-6-phosphate. This is Glucose-6-phosphate isomerase from Klebsiella pneumoniae subsp. pneumoniae (strain ATCC 700721 / MGH 78578).